The following is a 453-amino-acid chain: Lysine histidine transporter-like 1 (453 aa).

Over 1–44 (MYIQMTDGVPPPPEQSSLDHRIDELERQKEIDDWLPITSSRNAK) the chain is Cytoplasmic. A run of 2 helical transmembrane segments spans residues 45 to 65 (WWYS…LGLP) and 66 to 86 (FFMA…SWII). Over 87–122 (TLYTLWQMVEMHEMVPGKRFDRYHELGQFAFGERLG) the chain is Cytoplasmic. A helical membrane pass occupies residues 123–143 (LYIIVPQQIIVEVGVCIVYMV). The Extracellular segment spans residues 144 to 164 (TGGQSLKKFHEIACQDCSPIR). The chain crosses the membrane as a helical span at residues 165–185 (LSFFIMIFASSHFVLSHLPNF). Residues 186-187 (NS) are Cytoplasmic-facing. The helical transmembrane segment at 188-208 (ISGVSLVAAVMSLSYSTIAWT) threads the bilayer. Residues 209 to 231 (ATAAKGVQEDVQYGYKSGTTAST) are Extracellular-facing. A helical membrane pass occupies residues 232–252 (VLSFFTGLGGIAFAYAGHNVV). The Cytoplasmic segment spans residues 253 to 276 (LEIQATIPSTPSNPSKGPMWRGVV). A helical transmembrane segment spans residues 277–297 (VAYVVVALCYFPVALVGYGVF). Residues 298 to 318 (GNAVLDNVLMSLETPVWAIAT) are Extracellular-facing. A helical transmembrane segment spans residues 319–339 (ANLFVVMHVIGSYQIFAMPVF). Residues 340–359 (DMVETFLVKKLNFKPSTVLR) are Cytoplasmic-facing. Residues 360-382 (FIVRNVYVALTMFIGIMIPFFGG) traverse the membrane as a helical segment. Residues 383–385 (LLA) lie on the Extracellular side of the membrane. A helical membrane pass occupies residues 386-408 (FFGGFAFAPTSYFLPCIMWLLIY). At 409–412 (KPKR) the chain is on the cytoplasmic side. Residues 413 to 433 (FSLSWWTNWVCIVLGVVLMIL) traverse the membrane as a helical segment. At 434 to 453 (SSIGGLRQIIIQSKDYSFFS) the chain is on the extracellular side.

The protein belongs to the amino acid/polyamine transporter 2 family. Amino acid/auxin permease (AAAP) (TC 2.A.18.2) subfamily.

The protein localises to the cell membrane. In terms of biological role, amino acid transporter. The protein is Lysine histidine transporter-like 1 of Arabidopsis thaliana (Mouse-ear cress).